A 105-amino-acid chain; its full sequence is UPF0145 protein OEOE_0637 (105 aa).

Belongs to the UPF0145 family.

The sequence is that of UPF0145 protein OEOE_0637 from Oenococcus oeni (strain ATCC BAA-331 / PSU-1).